The primary structure comprises 188 residues: uncharacterized protein (188 aa).

A helical transmembrane segment spans residues 136-156 (TLVKLLLLFLSLMVVIVGVWW).

It is found in the host membrane. This is an uncharacterized protein from Magallana gigas (Pacific oyster).